The sequence spans 411 residues: MKYAEKSPALWDAIRQEEKRQQNTIELIASENIVSDAVREAQGSVLTNKYAEGYPGRRYYGGCQYIDQVEQLAIDYAKKLFNAKFANVQPHSGSQANMAVYQALLKPGDVILGMGMDAGGHLTHGAKVNFSGKEYKSYEYGLNVETEELDFDQIRKVALEVKPKLIVAGASAYSRIIDWQKFRDIADEVGAYLMVDMAHIAGLVATDQHPSPIPVADIVTTTTHKTLRGPRGGMILSNNLEIGKKINSALFPGIQGGPLEHVIAGKAQAFYEDLQPQFTDYIKQVVKNAKAMAEVFDESENIRVVSGGTDNHLMIIDITDTGLTGKDAQNLLDFVNITTNKESIPGDKRSPFITSGLRIGTPAITSRGFNEEDARKTASLIIEILSDPDNEATIEHVKKEVHELTKKHPVE.

(6S)-5,6,7,8-tetrahydrofolate is bound at residue 120–122 (GHL). N6-(pyridoxal phosphate)lysine is present on lysine 225. 350–352 (SPF) is a (6S)-5,6,7,8-tetrahydrofolate binding site.

Belongs to the SHMT family. In terms of assembly, homodimer. Requires pyridoxal 5'-phosphate as cofactor.

It is found in the cytoplasm. It carries out the reaction (6R)-5,10-methylene-5,6,7,8-tetrahydrofolate + glycine + H2O = (6S)-5,6,7,8-tetrahydrofolate + L-serine. It participates in one-carbon metabolism; tetrahydrofolate interconversion. Its pathway is amino-acid biosynthesis; glycine biosynthesis; glycine from L-serine: step 1/1. In terms of biological role, catalyzes the reversible interconversion of serine and glycine with tetrahydrofolate (THF) serving as the one-carbon carrier. This reaction serves as the major source of one-carbon groups required for the biosynthesis of purines, thymidylate, methionine, and other important biomolecules. Also exhibits THF-independent aldolase activity toward beta-hydroxyamino acids, producing glycine and aldehydes, via a retro-aldol mechanism. The chain is Serine hydroxymethyltransferase from Lactobacillus acidophilus (strain ATCC 700396 / NCK56 / N2 / NCFM).